The chain runs to 246 residues: Cytochrome c oxidase subunit 2 (246 aa).

A run of 2 helical transmembrane segments spans residues 31–51 (HMMY…YVMM) and 72–92 (IMWT…SFML). Cu cation is bound by residues histidine 175, cysteine 210, glutamate 212, cysteine 214, histidine 218, and methionine 221. A Mg(2+)-binding site is contributed by glutamate 212.

It belongs to the cytochrome c oxidase subunit 2 family. As to quaternary structure, component of the cytochrome c oxidase (complex IV, CIV), a multisubunit enzyme composed of a catalytic core of 3 subunits and several supernumerary subunits. The complex exists as a monomer or a dimer and forms supercomplexes (SCs) in the inner mitochondrial membrane with ubiquinol-cytochrome c oxidoreductase (cytochrome b-c1 complex, complex III, CIII). Requires Cu cation as cofactor.

It localises to the mitochondrion inner membrane. It catalyses the reaction 4 Fe(II)-[cytochrome c] + O2 + 8 H(+)(in) = 4 Fe(III)-[cytochrome c] + 2 H2O + 4 H(+)(out). Component of the cytochrome c oxidase, the last enzyme in the mitochondrial electron transport chain which drives oxidative phosphorylation. The respiratory chain contains 3 multisubunit complexes succinate dehydrogenase (complex II, CII), ubiquinol-cytochrome c oxidoreductase (cytochrome b-c1 complex, complex III, CIII) and cytochrome c oxidase (complex IV, CIV), that cooperate to transfer electrons derived from NADH and succinate to molecular oxygen, creating an electrochemical gradient over the inner membrane that drives transmembrane transport and the ATP synthase. Cytochrome c oxidase is the component of the respiratory chain that catalyzes the reduction of oxygen to water. Electrons originating from reduced cytochrome c in the intermembrane space (IMS) are transferred via the dinuclear copper A center (CU(A)) of subunit 2 and heme A of subunit 1 to the active site in subunit 1, a binuclear center (BNC) formed by heme A3 and copper B (CU(B)). The BNC reduces molecular oxygen to 2 water molecules using 4 electrons from cytochrome c in the IMS and 4 protons from the mitochondrial matrix. The sequence is that of Cytochrome c oxidase subunit 2 (COX2) from Debaryomyces hansenii (strain ATCC 36239 / CBS 767 / BCRC 21394 / JCM 1990 / NBRC 0083 / IGC 2968) (Yeast).